A 358-amino-acid polypeptide reads, in one-letter code: Serine/threonine-protein phosphatase 2A activator 2 (358 aa).

Interacts with the phosphatase PP2A catalytic subunits PPH21 and PPH22. Forms a ternary complex with PPH21-TAP42.

The protein localises to the cytoplasm. It catalyses the reaction [protein]-peptidylproline (omega=180) = [protein]-peptidylproline (omega=0). Functionally, PPIases accelerate the folding of proteins. It catalyzes the cis-trans isomerization of proline imidic peptide bonds in oligopeptides. Acts as a regulatory subunit for TAP42-associated PP2A-like phosphatases modulating their activity or substrate specificity, probably by inducing a conformational change in the catalytic subunit, a direct target of the PPIase. Can reactivate inactive phosphatase PP2A-phosphatase methylesterase complexes (PP2Ai) in presence of ATP and Mg(2+) by dissociating the inactive form from the complex. Acts also inhibitory at high concentrations. Involved in the regulation of cell cycle progression, mitotic spindle formation and bud morphogenesis. In Saccharomyces cerevisiae (strain ATCC 204508 / S288c) (Baker's yeast), this protein is Serine/threonine-protein phosphatase 2A activator 2 (RRD2).